Reading from the N-terminus, the 348-residue chain is MNRTDELRTARIDSLVTPTELAQRYPVSSSVASHVTDSRRRIEKILNGEDPRLLVVIGPCSIHDLNAAMEYATQLQAQRQKHQARLEIVMRTYFEKPRTVVGWKGLISDPDLNGSYRVNYGLELARRLLLQVNELGVPTATEFLDMVTGQFIADLISWGAIGARTTESQIHREMASALSCPVGFKNGTDGNTRIAVDAIRASRASHMFLSPDKDGQMTIYQTSGNPYGHIIMRGGKKPNYHAEDIAAACDTLHEFDLPEHLVVDFSHGNCQKQHRRQLEVCDDICQQIRNGSTAIAGIMAESFLREGTQKIISGQPLIYGQSITDPCLNWEDTEVLLEKLAAAVDSRF.

The protein belongs to the class-I DAHP synthase family.

It catalyses the reaction D-erythrose 4-phosphate + phosphoenolpyruvate + H2O = 7-phospho-2-dehydro-3-deoxy-D-arabino-heptonate + phosphate. Its pathway is metabolic intermediate biosynthesis; chorismate biosynthesis; chorismate from D-erythrose 4-phosphate and phosphoenolpyruvate: step 1/7. Its function is as follows. Stereospecific condensation of phosphoenolpyruvate (PEP) and D-erythrose-4-phosphate (E4P) giving rise to 3-deoxy-D-arabino-heptulosonate-7-phosphate (DAHP). The polypeptide is Phospho-2-dehydro-3-deoxyheptonate aldolase, Trp-sensitive (aroH) (Salmonella typhimurium (strain LT2 / SGSC1412 / ATCC 700720)).